We begin with the raw amino-acid sequence, 264 residues long: tRNA (guanine-N(1)-)-methyltransferase (264 aa).

149–154 (IGDYVL) serves as a coordination point for S-adenosyl-L-methionine.

It belongs to the RNA methyltransferase TrmD family. In terms of assembly, homodimer.

It is found in the cytoplasm. It carries out the reaction guanosine(37) in tRNA + S-adenosyl-L-methionine = N(1)-methylguanosine(37) in tRNA + S-adenosyl-L-homocysteine + H(+). Functionally, specifically methylates guanosine-37 in various tRNAs. In Methylobacillus flagellatus (strain ATCC 51484 / DSM 6875 / VKM B-1610 / KT), this protein is tRNA (guanine-N(1)-)-methyltransferase.